A 334-amino-acid chain; its full sequence is Methionine adenosyltransferase 2 subunit beta (334 aa).

NADP(+)-binding positions include 37 to 40 (TGLL), 60 to 62 (YSR), 71 to 72 (NL), C93, R97, Y159, and L185. The interval 319–334 (LWPFLVDKRWRQTVFH) is required for interaction with MAT2A.

The protein belongs to the dTDP-4-dehydrorhamnose reductase family. MAT2B subfamily. Heterotrimer; composed of a catalytic mat2a homodimer that binds one regulatory mat2b chain. Heterohexamer; composed of a central, catalytic mat2a homotetramer flanked on either side by a regulatory mat2b chain. NADP binding increases the affinity for mat2a.

Its pathway is amino-acid biosynthesis; S-adenosyl-L-methionine biosynthesis; S-adenosyl-L-methionine from L-methionine: step 1/1. Functionally, regulatory subunit of S-adenosylmethionine synthetase 2, an enzyme that catalyzes the formation of S-adenosylmethionine from methionine and ATP. Regulates MAT2A catalytic activity by changing its kinetic properties, increasing its affinity for L-methionine. Can bind NADP (in vitro). The protein is Methionine adenosyltransferase 2 subunit beta (mat2b) of Xenopus tropicalis (Western clawed frog).